The sequence spans 435 residues: Temperature-sensitive sn-2 acyl-lipid omega-3 desaturase (ferredoxin), chloroplastic (435 aa).

The transit peptide at 1-42 directs the protein to the chloroplast; sequence MASSVLSECGFRPLPRFYPKHTTSFASNPKPTFKFNPPLKPP. 2 consecutive transmembrane segments (helical) span residues 111–131 and 134–154; these read MSYV…AAYF and WLLW…LFVL. The Histidine box-1 signature appears at 156–160; that stretch reads HDCGH. Residues 192-196 carry the Histidine box-2 motif; that stretch reads HRTHH. 2 consecutive transmembrane segments (helical) span residues 268–290 and 297–319; these read VLTS…FVMG and LYGI…HHHG. A Histidine box-3 motif is present at residues 359-363; sequence HVIHH.

This sequence belongs to the fatty acid desaturase type 1 family.

It is found in the plastid. Its subcellular location is the chloroplast membrane. It catalyses the reaction a (7Z,10Z)-hexadecadienoyl-containing glycerolipid + 2 reduced [2Fe-2S]-[ferredoxin] + O2 + 2 H(+) = a (7Z,10Z,13Z)-hexadecatrienoyl-containing glycerolipid + 2 oxidized [2Fe-2S]-[ferredoxin] + 2 H2O. It carries out the reaction a (9Z,12Z)-octadecadienoyl-containing glycerolipid + 2 reduced [2Fe-2S]-[ferredoxin] + O2 + 2 H(+) = (9Z,12Z,15Z)-octadecatrienoyl-containing glycerolipid + 2 oxidized [2Fe-2S]-[ferredoxin] + 2 H2O. The protein operates within lipid metabolism; polyunsaturated fatty acid biosynthesis. Its function is as follows. Chloroplast omega-3 fatty acid desaturase introduces the third double bond in the biosynthesis of 16:3 and 18:3 fatty acids, important constituents of plant membranes. It is thought to use ferredoxin as an electron donor and to act on fatty acids esterified to galactolipids, sulfolipids and phosphatidylglycerol. The protein is Temperature-sensitive sn-2 acyl-lipid omega-3 desaturase (ferredoxin), chloroplastic of Arabidopsis thaliana (Mouse-ear cress).